Consider the following 1356-residue polypeptide: Vegetative incompatibility protein HET-E-1 (1356 aa).

The region spanning 294 to 629 is the NACHT domain; the sequence is RLLWINGDPG…DFLLGTASDK (336 aa). GTP is bound at residue 300–307; the sequence is GDPGKGKT. WD repeat units follow at residues 839-869, 881-911, 923-953, 965-995, 1007-1037, 1049-1079, 1091-1121, 1133-1163, 1175-1205, and 1217-1247; these read GHGS…KIWD, GHGG…KIWD, and GHGD…KIWD.

In terms of biological role, responsible for vegetative incompatibility through specific interactions with different alleles of the unlinked gene, het-c. This Podospora anserina (Pleurage anserina) protein is Vegetative incompatibility protein HET-E-1 (HET-E1).